A 222-amino-acid chain; its full sequence is Ethylene-inducing xylanase 2 (222 aa).

The signal sequence occupies residues 1 to 19; that stretch reads MITFSSLLVTFSAISTSLA. A GH11 domain is found at 36-222; the sequence is QRNESSLVRR…GEGAATQTVS (187 aa). 2 N-linked (GlcNAc...) asparagine glycosylation sites follow: N38 and N94. The active-site Nucleophile is E120. E209 serves as the catalytic Proton donor.

This sequence belongs to the glycosyl hydrolase 11 (cellulase G) family.

It carries out the reaction Endohydrolysis of (1-&gt;4)-beta-D-xylosidic linkages in xylans.. The protein operates within glycan degradation; xylan degradation. In terms of biological role, endo-1,4-beta-xylanase involved in the hydrolysis of xylan, a major structural heterogeneous polysaccharide found in plant biomass representing the second most abundant polysaccharide in the biosphere, after cellulose. May act as an elicitor of plant defense responses in certain plants but does not exhibit any cell death when transiently expressed in N.benthamiana. This is Ethylene-inducing xylanase 2 from Botryotinia fuckeliana (strain B05.10) (Noble rot fungus).